The following is a 437-amino-acid chain: GTPase Der (437 aa).

EngA-type G domains lie at 3–168 (PLIA…PCPE) and 178–353 (IKLA…LNRR). GTP contacts are provided by residues 9–16 (GRPNVGKS), 56–60 (DTGGY), 120–123 (NKVD), 184–191 (GRPNVGKS), 231–235 (DTAGL), and 296–299 (NKWD). A KH-like domain is found at 354–437 (QKISTSNLNR…IPITMRFLRK (84 aa)).

Belongs to the TRAFAC class TrmE-Era-EngA-EngB-Septin-like GTPase superfamily. EngA (Der) GTPase family. Associates with the 50S ribosomal subunit.

GTPase that plays an essential role in the late steps of ribosome biogenesis. The chain is GTPase Der from Chlorobaculum tepidum (strain ATCC 49652 / DSM 12025 / NBRC 103806 / TLS) (Chlorobium tepidum).